The chain runs to 537 residues: MTGKTAPAAAKKAPAAKKAPAPASKKAPEPAPKEKPAPTPKEGHAPTPKEEHAPPPKEEHAPPPKEEHAPAPAAETPPAPEHPPDAEQPAAPAAEHAPTPTHEAAPAHEEGPPPAAPAEAPAPEPEPEKPKEEPPSVPLSLAVEEVTENSVTLTWKAPEHTGKSSLDGYVVEICKDGSTDWTAVNKEPFLSTRYKIHDLASGEKVHVRVKAISASGTSDPATLEQPVLIREITDLPRIRLPRQLRQVYVRHVGEAVNLLIPFQGKPQPQVTWTKDNQPLDTSRVNIRNTDKDTIFFIRTAQRSDSGKYQLSVRINGAEDKAILDIRVIERPGPPQNLKLVDVWGFNVALEWSPPADNGNSEIKGYTVQKSDKKSGKWFTVLERCTRTSCTISDLIIGNTYSFRVFSENACGMSETAAVAAGVAHIKKTVYQPQKIPERDMMEPPKFTQPLTDRATTRGYSTHLFCSVRGFPQPKIIWMKNKMEIREDPKYIAMIEQGVCSLEIRKPSPFDAGVYTCKAVNPLGEASVDCKLDVKMPK.

Over residues 1 to 25 (MTGKTAPAAAKKAPAAKKAPAPASK) the composition is skewed to low complexity. Residues 1–138 (MTGKTAPAAA…KPKEEPPSVP (138 aa)) are disordered. The segment covering 26–69 (KAPEPAPKEKPAPTPKEGHAPTPKEEHAPPPKEEHAPPPKEEHA) has biased composition (basic and acidic residues). Residues 87–104 (EQPAAPAAEHAPTPTHEA) are compositionally biased toward low complexity. The segment covering 112 to 124 (PPPAAPAEAPAPE) has biased composition (pro residues). The Fibronectin type-III 1 domain occupies 137 to 232 (VPLSLAVEEV…LEQPVLIREI (96 aa)). In terms of domain architecture, Ig-like C2-type 1 spans 236–324 (PRIRLPRQLR…NGAEDKAILD (89 aa)). One can recognise a Fibronectin type-III 2 domain in the interval 333–428 (PPQNLKLVDV…AAGVAHIKKT (96 aa)). The Ig-like C2-type 2 domain maps to 444 to 528 (PKFTQPLTDR…VNPLGEASVD (85 aa)).

It belongs to the immunoglobulin superfamily. MyBP family. As to expression, skeletal muscle. Seems to be also expressed in the slow tonic ald muscle. Not detected in gizzard or heart.

Binds to myosin; probably involved in interaction with thick myofilaments in the A-band. The polypeptide is Myosin-binding protein H (MYBPH) (Gallus gallus (Chicken)).